Consider the following 632-residue polypeptide: Phosphomethylpyrimidine synthase (632 aa).

Residues Asn-237, Met-266, Tyr-295, His-331, 351 to 353 (SRG), 392 to 395 (DGLR), and Glu-431 contribute to the substrate site. His-435 provides a ligand contact to Zn(2+). Tyr-458 contributes to the substrate binding site. Zn(2+) is bound at residue His-499. [4Fe-4S] cluster-binding residues include Cys-579, Cys-582, and Cys-587.

This sequence belongs to the ThiC family. Homodimer. Requires [4Fe-4S] cluster as cofactor.

It catalyses the reaction 5-amino-1-(5-phospho-beta-D-ribosyl)imidazole + S-adenosyl-L-methionine = 4-amino-2-methyl-5-(phosphooxymethyl)pyrimidine + CO + 5'-deoxyadenosine + formate + L-methionine + 3 H(+). It functions in the pathway cofactor biosynthesis; thiamine diphosphate biosynthesis. Functionally, catalyzes the synthesis of the hydroxymethylpyrimidine phosphate (HMP-P) moiety of thiamine from aminoimidazole ribotide (AIR) in a radical S-adenosyl-L-methionine (SAM)-dependent reaction. The protein is Phosphomethylpyrimidine synthase of Chromobacterium violaceum (strain ATCC 12472 / DSM 30191 / JCM 1249 / CCUG 213 / NBRC 12614 / NCIMB 9131 / NCTC 9757 / MK).